The sequence spans 772 residues: Protein U58 (772 aa).

The protein belongs to the herpesviridae UL87 family.

In Human herpesvirus 6B (strain Z29) (HHV-6 variant B), this protein is Protein U58 (U58).